The sequence spans 107 residues: MALTKICSSGDLAPGEMLRFEEGPEPILVCNVGGEFFATQDTCSHADWALSEGYLEDDVVECTLHWAKFCVRTGKAKALPACVPLRTFVVKLEGDDVLVDLEGGVTT.

The 96-residue stretch at 4–99 (TKICSSGDLA…VKLEGDDVLV (96 aa)) folds into the Rieske domain. Cys-43, His-45, Cys-62, and His-65 together coordinate [2Fe-2S] cluster.

This sequence belongs to the bacterial ring-hydroxylating dioxygenase ferredoxin component family. The multicomponent biphenyl dioxygenase system is composed of a ferredoxin reductase (BphA4), a ferredoxin (BphA3), and a terminal oxygenase (BphA1A2). [2Fe-2S] cluster is required as a cofactor.

It functions in the pathway xenobiotic degradation; biphenyl degradation. In terms of biological role, ferredoxin component of the biphenyl dioxygenase system that catalyzes the stereospecific dihydroxylation of the aromatic ring of biphenyl, yielding a dihydrodiol compound. Is likely involved in biphenyl degradation that allows growth of Rhodococcus sp. strain RHA1 on biphenyl as the sole source of carbon and energy. The dioxygenase system can also use naphtalene and 4-chlorobiphenyl (4-CB) as substrates, as well as some polychlorinated biphenyls (PCB) such as 2,2'-dichlorobiphenyl, 2,3-dichlorobiphenyl and 2,5,2'-trichlorobiphenyl. It exhibits weak activity toward dibenzofuran and dibenzo-p-dioxin. Electrons are transferred from NADH to the [2Fe-2S] cluster in BphA1 via FAD of BphA4 and [2Fe-2S] cluster of BphA3. This chain is Biphenyl 2,3-dioxygenase, ferredoxin component, found in Rhodococcus jostii (strain RHA1).